Reading from the N-terminus, the 765-residue chain is 5-methyltetrahydropteroyltriglutamate--homocysteine methyltransferase (765 aa).

5-methyltetrahydropteroyltri-L-glutamate contacts are provided by residues 18-21 (REWK) and Lys114. L-homocysteine-binding positions include 437 to 439 (IGS) and Glu490. Residues 437–439 (IGS) and Glu490 each bind L-methionine. Trp567 lines the 5-methyltetrahydropteroyltri-L-glutamate pocket. An L-homocysteine-binding site is contributed by Asp605. Asp605 provides a ligand contact to L-methionine. Glu611 contributes to the 5-methyltetrahydropteroyltri-L-glutamate binding site. 3 residues coordinate Zn(2+): His647, Cys649, and Glu671. The Proton donor role is filled by His700. Residue Cys732 participates in Zn(2+) binding.

This sequence belongs to the vitamin-B12 independent methionine synthase family. The cofactor is Zn(2+).

The enzyme catalyses 5-methyltetrahydropteroyltri-L-glutamate + L-homocysteine = tetrahydropteroyltri-L-glutamate + L-methionine. It participates in amino-acid biosynthesis; L-methionine biosynthesis via de novo pathway; L-methionine from L-homocysteine (MetE route): step 1/1. Its function is as follows. Catalyzes the transfer of a methyl group from 5-methyltetrahydrofolate to homocysteine resulting in methionine formation. The chain is 5-methyltetrahydropteroyltriglutamate--homocysteine methyltransferase from Listeria welshimeri serovar 6b (strain ATCC 35897 / DSM 20650 / CCUG 15529 / CIP 8149 / NCTC 11857 / SLCC 5334 / V8).